The following is a 185-amino-acid chain: Potassium-transporting ATPase KdpC subunit (185 aa).

The chain crosses the membrane as a helical span at residues 11–31 (LALLMTLVTGALYPLAVTGIA).

Belongs to the KdpC family. The system is composed of three essential subunits: KdpA, KdpB and KdpC.

The protein resides in the cell inner membrane. Functionally, part of the high-affinity ATP-driven potassium transport (or Kdp) system, which catalyzes the hydrolysis of ATP coupled with the electrogenic transport of potassium into the cytoplasm. This subunit acts as a catalytic chaperone that increases the ATP-binding affinity of the ATP-hydrolyzing subunit KdpB by the formation of a transient KdpB/KdpC/ATP ternary complex. In Pseudomonas putida (strain ATCC 47054 / DSM 6125 / CFBP 8728 / NCIMB 11950 / KT2440), this protein is Potassium-transporting ATPase KdpC subunit.